Here is a 68-residue protein sequence, read N- to C-terminus: Large ribosomal subunit protein uL30 (68 aa).

Belongs to the universal ribosomal protein uL30 family. In terms of assembly, part of the 50S ribosomal subunit.

The sequence is that of Large ribosomal subunit protein uL30 from Pseudarthrobacter chlorophenolicus (strain ATCC 700700 / DSM 12829 / CIP 107037 / JCM 12360 / KCTC 9906 / NCIMB 13794 / A6) (Arthrobacter chlorophenolicus).